A 433-amino-acid chain; its full sequence is Protein translocase subunit SecY (433 aa).

The next 10 membrane-spanning stretches (helical) occupy residues 17 to 37 (IIFTIFVLIICRFGSFIPIAG), 71 to 91 (IFALAIMPYITASIIIQLMSV), 117 to 137 (LTVLLASLQAYGVAVSLESIV), 141 to 161 (GPVVIIPGLFFKITTVITLVV), 184 to 204 (LIIFIGIISGVPSAIISMFEL), 212 to 232 (PLVAIAVCAGVVILISIIIFF), 268 to 288 (GVIPPIFASSILLFPATLANF), 309 to 329 (IYILLYVALIMFFSFFYTAIV), 366 to 386 (LTVVGGIYLSVICIIPELLMN), and 388 to 408 (YVISLSLGGTSFLIVVNVVLD).

It belongs to the SecY/SEC61-alpha family. As to quaternary structure, component of the Sec protein translocase complex. Heterotrimer consisting of SecY, SecE and SecG subunits. The heterotrimers can form oligomers, although 1 heterotrimer is thought to be able to translocate proteins. Interacts with the ribosome. Interacts with SecDF, and other proteins may be involved. Interacts with SecA.

The protein localises to the cell inner membrane. Functionally, the central subunit of the protein translocation channel SecYEG. Consists of two halves formed by TMs 1-5 and 6-10. These two domains form a lateral gate at the front which open onto the bilayer between TMs 2 and 7, and are clamped together by SecE at the back. The channel is closed by both a pore ring composed of hydrophobic SecY resides and a short helix (helix 2A) on the extracellular side of the membrane which forms a plug. The plug probably moves laterally to allow the channel to open. The ring and the pore may move independently. This Rickettsia bellii (strain RML369-C) protein is Protein translocase subunit SecY.